A 526-amino-acid polypeptide reads, in one-letter code: Cytochrome P450 monooxygenase BOT4 (526 aa).

Asparagine 5 carries N-linked (GlcNAc...) asparagine glycosylation. The chain crosses the membrane as a helical span at residues 41-61; the sequence is CLVAIILCRFIAVWSYNLWFH. Residues asparagine 205 and asparagine 281 are each glycosylated (N-linked (GlcNAc...) asparagine). Cysteine 464 contributes to the heme binding site.

Belongs to the cytochrome P450 family. Requires heme as cofactor.

The protein resides in the membrane. It participates in secondary metabolite biosynthesis. Functionally, cytochrome P450 monooxygenase; part of the gene cluster that mediates the biosynthesis of botrydial. Botrydial is necessary for colonization of plant tissue by the T4 strain. It is a strain-dependent virulence factor since highly aggressive strains like SAS56 or B05 still retain substantial virulence when botrydial synthesis is impaired, since they produce also botcinic acid. The first step of botrydial biosynthesis is performed by the sesquiterpene synthase BOT2 which catalyzes the cyclization of farnesyl diphosphate (FPP) to presilphiperfolan-8-beta-ol (PSP). The cytochrome P450 monooxygenase BOT4 then catalyzes the hydroxylation at C-4 to give a probotryane intermediate. Acetylation of the hydroxyl at C-4 is carried out by the acetyltransferase BOT5, followed by the combined action of the P450 monooxygenases BOT3 and BOT1, to yield finally the glycol, via the regio- and stereospecific hydroxylations at C-10 and C-15 of the probotryane intermediates, respectively. The cleavage of the C10-C15 bond of probotryane skeleton is an intriguing and chemically important reaction, which could be mediated by some of the monooxygenases or by a combination of them. It is possible that either BOT3 or BOT1 would oxidize either the 10- or the 15-hydroxy group to the hydroperoxide derivative, which would then undergo heterolytic fragmentation to give the dialdehyde botrydial. Finally, the dehydrogenase BOT7 might be involved in the conversion of botrydial to dihydrobotrydial. The polypeptide is Cytochrome P450 monooxygenase BOT4 (Botryotinia fuckeliana (Noble rot fungus)).